The following is a 504-amino-acid chain: Tyrosine-protein phosphatase non-receptor type substrate 1 (504 aa).

The N-terminal stretch at 1 to 30 is a signal peptide; sequence MEPAGPAPGRLGPLLCLLLAASCAWSGVAG. Residues 31-373 lie on the Extracellular side of the membrane; it reads EEELQVIQPD…NTGSNERNIY (343 aa). An Ig-like V-type domain is found at 32–137; that stretch reads EELQVIQPDK…SPDDVEFKSG (106 aa). 2 cysteine pairs are disulfide-bonded: C55–C121 and C170–C228. 2 Ig-like C1-type domains span residues 148-247 and 254-348; these read PSAP…ANLS and PTLE…HDLK. N-linked (GlcNAc...) asparagine glycosylation is found at N245, N270, N292, and N319. Residues C273 and C331 are joined by a disulfide bond. Over residues 336 to 355 the composition is skewed to basic and acidic residues; the sequence is DGQPAVSKSHDLKVSAHPKE. Residues 336 to 364 are disordered; the sequence is DGQPAVSKSHDLKVSAHPKEQGSNTAAEN. The helical transmembrane segment at 374–394 threads the bilayer; sequence IVVGVVCTLLVALLMAALYLV. At 395–504 the chain is on the cytoplasmic side; the sequence is RIRQKKAQGS…EYASVQVPRK (110 aa). The disordered stretch occupies residues 402 to 504; sequence QGSTSSTRLH…EYASVQVPRK (103 aa). A compositionally biased stretch (basic and acidic residues) spans 409–421; it reads RLHEPEKNAREIT. The residue at position 429 (Y429) is a Phosphotyrosine; by Tyr-kinases. Positions 429–432 match the SH2-binding motif; it reads YADL. Residues 439 to 444 carry the SH3-binding motif; it reads KPAPQA. The segment covering 446–467 has biased composition (polar residues); it reads EPNNHTEYASIQTSPQPASEDT. Y453 and Y470 each carry phosphotyrosine; by Tyr-kinases. 3 short sequence motifs (SH2-binding) span residues 453–456, 470–473, and 496–499; these read YASI, YADL, and YASV. Y496 bears the Phosphotyrosine mark.

Binds PTPN11 when tyrosine-phosphorylated, except in macrophages, where it primarily binds PTPN6. Binds GRB2 in vitro. Binds FGR. Binds JAK2 irrespective of its phosphorylation status and forms a stable complex. Binds SCAP1 and/or SCAP2. The resulting complex recruits FYB1. Binds PTK2B. Interacts with TRIM2. Post-translationally, N-glycosylated. Phosphorylated on tyrosine residues in response to stimulation with EGF, growth hormone, insulin and PDGF. Dephosphorylated by PTPN11. As to expression, ubiquitous. Highly expressed in brain. Detected on myeloid cells, but not T-cells. Detected at lower levels in heart, placenta, lung, testis, ovary, colon, liver, small intestine, prostate, spleen, kidney, skeletal muscle and pancreas.

It localises to the membrane. In terms of biological role, immunoglobulin-like cell surface receptor for CD47. Acts as docking protein and induces translocation of PTPN6, PTPN11 and other binding partners from the cytosol to the plasma membrane. Supports adhesion of cerebellar neurons, neurite outgrowth and glial cell attachment. May play a key role in intracellular signaling during synaptogenesis and in synaptic function. Involved in the negative regulation of receptor tyrosine kinase-coupled cellular responses induced by cell adhesion, growth factors or insulin. Mediates negative regulation of phagocytosis, mast cell activation and dendritic cell activation. CD47 binding prevents maturation of immature dendritic cells and inhibits cytokine production by mature dendritic cells. Plays a role in antiviral immunity and limits new world arenavirus infection by decreasing virus internalization. Receptor for THBS1. Interaction with THBS1 stimulates phosphorylation of SIRPA. In response to THBS1, involved in ROS signaling in non-phagocytic cells, stimulating NADPH oxidase-derived ROS production. The sequence is that of Tyrosine-protein phosphatase non-receptor type substrate 1 (SIRPA) from Homo sapiens (Human).